The chain runs to 394 residues: Dihydroorotase (394 aa).

Zn(2+)-binding residues include H15, H17, K98, H135, H175, and D245. K98 carries the N6-carboxylysine modification.

Belongs to the metallo-dependent hydrolases superfamily. DHOase family. Class II DHOase subfamily. Requires Zn(2+) as cofactor.

It carries out the reaction (S)-dihydroorotate + H2O = N-carbamoyl-L-aspartate + H(+). It functions in the pathway pyrimidine metabolism; UMP biosynthesis via de novo pathway; (S)-dihydroorotate from bicarbonate: step 3/3. The polypeptide is Dihydroorotase (PYR3) (Mycosarcoma maydis (Corn smut fungus)).